We begin with the raw amino-acid sequence, 675 residues long: Methionine--tRNA ligase (675 aa).

Residues 15–25 (PYANGSIHLGH) carry the 'HIGH' region motif. Zn(2+) is bound by residues Cys146, Cys149, Cys159, and Cys162. The 'KMSKS' region signature appears at 332–336 (KMSKS). ATP is bound at residue Lys335. Positions 573 to 675 (DFAKVDMRIA…SGAQPGMQVK (103 aa)) constitute a tRNA-binding domain.

It belongs to the class-I aminoacyl-tRNA synthetase family. MetG type 1 subfamily. In terms of assembly, homodimer. It depends on Zn(2+) as a cofactor.

The protein localises to the cytoplasm. It carries out the reaction tRNA(Met) + L-methionine + ATP = L-methionyl-tRNA(Met) + AMP + diphosphate. In terms of biological role, is required not only for elongation of protein synthesis but also for the initiation of all mRNA translation through initiator tRNA(fMet) aminoacylation. This is Methionine--tRNA ligase from Yersinia pseudotuberculosis serotype IB (strain PB1/+).